The chain runs to 492 residues: Probable cobyric acid synthase (492 aa).

The region spanning 252–444 (PIEVNVVKFS…FHGILENFEF (193 aa)) is the GATase cobBQ-type domain. C330 functions as the Nucleophile in the catalytic mechanism. Residue H436 is part of the active site.

This sequence belongs to the CobB/CobQ family. CobQ subfamily.

The protein operates within cofactor biosynthesis; adenosylcobalamin biosynthesis. Its function is as follows. Catalyzes amidations at positions B, D, E, and G on adenosylcobyrinic A,C-diamide. NH(2) groups are provided by glutamine, and one molecule of ATP is hydrogenolyzed for each amidation. In Methanococcus maripaludis (strain DSM 14266 / JCM 13030 / NBRC 101832 / S2 / LL), this protein is Probable cobyric acid synthase.